Consider the following 141-residue polypeptide: UPF0179 protein Cmaq_1008 (141 aa).

This sequence belongs to the UPF0179 family.

This is UPF0179 protein Cmaq_1008 from Caldivirga maquilingensis (strain ATCC 700844 / DSM 13496 / JCM 10307 / IC-167).